Consider the following 373-residue polypeptide: Dual-specificity RNA methyltransferase RlmN (373 aa).

The active-site Proton acceptor is the Glu-94. In terms of domain architecture, Radical SAM core spans 100–339 (EDDRATLCVS…VIVRKTRGDD (240 aa)). Cys-107 and Cys-344 are disulfide-bonded. Cys-114, Cys-118, and Cys-121 together coordinate [4Fe-4S] cluster. Residues 168–169 (GE), Ser-200, 222–224 (SIH), and Asn-301 contribute to the S-adenosyl-L-methionine site. Cys-344 serves as the catalytic S-methylcysteine intermediate.

It belongs to the radical SAM superfamily. RlmN family. It depends on [4Fe-4S] cluster as a cofactor.

It localises to the cytoplasm. It catalyses the reaction adenosine(2503) in 23S rRNA + 2 reduced [2Fe-2S]-[ferredoxin] + 2 S-adenosyl-L-methionine = 2-methyladenosine(2503) in 23S rRNA + 5'-deoxyadenosine + L-methionine + 2 oxidized [2Fe-2S]-[ferredoxin] + S-adenosyl-L-homocysteine. It carries out the reaction adenosine(37) in tRNA + 2 reduced [2Fe-2S]-[ferredoxin] + 2 S-adenosyl-L-methionine = 2-methyladenosine(37) in tRNA + 5'-deoxyadenosine + L-methionine + 2 oxidized [2Fe-2S]-[ferredoxin] + S-adenosyl-L-homocysteine. Its function is as follows. Specifically methylates position 2 of adenine 2503 in 23S rRNA and position 2 of adenine 37 in tRNAs. m2A2503 modification seems to play a crucial role in the proofreading step occurring at the peptidyl transferase center and thus would serve to optimize ribosomal fidelity. The protein is Dual-specificity RNA methyltransferase RlmN of Shewanella sp. (strain MR-7).